Reading from the N-terminus, the 176-residue chain is Oleosin Ara h 14.0103 (176 aa).

N-acetylalanine; alternate is present on Ala-2. 3 consecutive transmembrane segments (helical) span residues 50 to 70, 75 to 95, and 96 to 116; these read IIAV…SGLS, IIGL…IVPA, and VVTI…GLTG. The interval 156-176 is disordered; that stretch reads KTKDAGQEIQTKAQDVKRSSS.

The protein belongs to the oleosin family. As to expression, expressed in seeds (at protein level).

It is found in the lipid droplet. The protein resides in the membrane. Its function is as follows. May have a structural role to stabilize the lipid body during desiccation of the seed by preventing coalescence of the oil. Probably interacts with both lipid and phospholipid moieties of lipid bodies. May also provide recognition signals for specific lipase anchorage in lipolysis during seedling growth. This is Oleosin Ara h 14.0103 from Arachis hypogaea (Peanut).